A 144-amino-acid chain; its full sequence is MPLYEHVLIARQDLSNAQAEGLIEHFSTVIGDNGGKVLGTEYWGVKTMAYKINKNRKGHYGFLRTDAPSAAVQEMERLARLHDDVMRVLTIKVDGHDEGPSVQMQKRDDRGDREERGDRGDRGDRGPRGDRGPREDRGPRPERR.

Positions 92–144 (KVDGHDEGPSVQMQKRDDRGDREERGDRGDRGDRGPRGDRGPREDRGPRPERR) are disordered. Positions 93 to 144 (VDGHDEGPSVQMQKRDDRGDREERGDRGDRGDRGPRGDRGPREDRGPRPERR) are enriched in basic and acidic residues.

This sequence belongs to the bacterial ribosomal protein bS6 family.

Binds together with bS18 to 16S ribosomal RNA. This is Small ribosomal subunit protein bS6 (rpsF) from Rhodobacter capsulatus (strain ATCC BAA-309 / NBRC 16581 / SB1003).